Reading from the N-terminus, the 197-residue chain is Endo-1,4-beta-xylanase A (197 aa).

The GH11 domain occupies S1–T197. The Nucleophile role is filled by E87. A disulfide bond links C111 and C160. E184 functions as the Proton donor in the catalytic mechanism.

It belongs to the glycosyl hydrolase 11 (cellulase G) family.

It is found in the secreted. It catalyses the reaction Endohydrolysis of (1-&gt;4)-beta-D-xylosidic linkages in xylans.. It participates in glycan degradation; xylan degradation. Functionally, hydrolyzes xylans into xylobiose and xylose. This chain is Endo-1,4-beta-xylanase A (XYNA), found in Schizophyllum commune (Split gill fungus).